The following is an 896-amino-acid chain: NET1-associated nuclear protein 1 (896 aa).

WD repeat units follow at residues 295 to 334 (WHIDSVLSLSFSHDGSYLLSGGWEKVMSLWQLETNSQQFL), 490 to 542 (LQDP…TNWN), 552 to 595 (GISV…SNWC), and 605 to 645 (NHFS…ESLE).

As to quaternary structure, interacts with snoRNA U3. Interacts with MPP10. Component of the ribosomal small subunit (SSU) processome composed of at least 40 protein subunits and snoRNA U3. In the absence of snoRNA3, forms a complex with other t-UTPs. This complex can associate with pre-18S ribosomal RNAs.

It localises to the nucleus. It is found in the nucleolus. Involved in nucleolar processing of pre-18S ribosomal RNA. Required for optimal pre-ribosomal RNA transcription by RNA polymerase I together with a subset of U3 proteins required for transcription (t-UTPs). The sequence is that of NET1-associated nuclear protein 1 (NAN1) from Saccharomyces cerevisiae (strain ATCC 204508 / S288c) (Baker's yeast).